Reading from the N-terminus, the 174-residue chain is Shikimate kinase 2 (174 aa).

An ATP-binding site is contributed by 12 to 17; that stretch reads GCGKTT. Thr16 and Asp32 together coordinate Mg(2+). Substrate-binding residues include Asp34, Arg58, and Gly79. The interval 112–126 is LID domain; sequence RAYPEDDQRPSLTGK. ATP is bound at residue Arg120. Arg139 contributes to the substrate binding site. Gln155 is an ATP binding site.

Belongs to the shikimate kinase family. AroL subfamily. As to quaternary structure, monomer. Mg(2+) is required as a cofactor.

It localises to the cytoplasm. The enzyme catalyses shikimate + ATP = 3-phosphoshikimate + ADP + H(+). It participates in metabolic intermediate biosynthesis; chorismate biosynthesis; chorismate from D-erythrose 4-phosphate and phosphoenolpyruvate: step 5/7. Catalyzes the specific phosphorylation of the 3-hydroxyl group of shikimic acid using ATP as a cosubstrate. This is Shikimate kinase 2 from Sodalis glossinidius (strain morsitans).